Consider the following 820-residue polypeptide: Scavenger receptor class F member 1 (820 aa).

The signal sequence occupies residues 1–23; sequence MLAAMGLELVFSLLLLWTQGTQG. At 24–422 the chain is on the extracellular side; the sequence is STLDPAGQHV…TCQLGRHGKN (399 aa). 4 EGF-like domains span residues 56–90, 98–133, 163–193, and 217–251; these read TIPI…AQCS, WGHD…RLCE, RRPC…RRCS, and WGPE…IRCE. Intrachain disulfides connect Cys60–Cys72, Cys66–Cys78, Cys80–Cys89, Cys102–Cys114, Cys108–Cys121, Cys123–Cys132, Cys166–Cys174, Cys168–Cys181, Cys183–Cys192, Cys221–Cys232, Cys225–Cys239, and Cys241–Cys250. A glycan (N-linked (GlcNAc...) asparagine) is linked at Asn291. EGF-like domains lie at 304–341 and 353–384; these read FGER…HRCE and CSST…TSCN. Residues 423-443 traverse the membrane as a helical segment; it reads ALIVGILVPLLLLLMGIVCCA. Over 444–820 the chain is Cytoplasmic; sequence YCCSGTRLDP…VVPMSVPPQH (377 aa). Disordered stretches follow at residues 549-685 and 715-820; these read PMAQ…IQES and NYQK…PPQH. A phosphoserine mark is found at Ser590 and Ser607. Residues 631 to 648 show a composition bias toward acidic residues; the sequence is QEAEESTGPEQVNTEEDA. Polar residues predominate over residues 650–662; the sequence is TATSSGDPATSHG.

As to quaternary structure, heterophilic interaction with SREC2 via its extracellular domain. The heterophilic interaction is suppressed by the presence of ligand such as Ac-LDL. Interacts with AVIL; the interaction occurs in embryonic dorsal root ganglions at 18 dpc and induces neurite-like outgrowth. In terms of tissue distribution, expressed weakly in brain, spinal cord and dorsal root ganglions.

It localises to the membrane. Its function is as follows. Mediates the binding and degradation of acetylated low density lipoprotein (Ac-LDL). Mediates heterophilic interactions, suggesting a function as adhesion protein. Plays a role in the regulation of neurite-like outgrowth. The protein is Scavenger receptor class F member 1 (Scarf1) of Mus musculus (Mouse).